We begin with the raw amino-acid sequence, 262 residues long: Acyl-[acyl-carrier-protein]--UDP-N-acetylglucosamine O-acyltransferase (262 aa).

It belongs to the transferase hexapeptide repeat family. LpxA subfamily. As to quaternary structure, homotrimer.

The protein resides in the cytoplasm. The catalysed reaction is a (3R)-hydroxyacyl-[ACP] + UDP-N-acetyl-alpha-D-glucosamine = a UDP-3-O-[(3R)-3-hydroxyacyl]-N-acetyl-alpha-D-glucosamine + holo-[ACP]. The protein operates within glycolipid biosynthesis; lipid IV(A) biosynthesis; lipid IV(A) from (3R)-3-hydroxytetradecanoyl-[acyl-carrier-protein] and UDP-N-acetyl-alpha-D-glucosamine: step 1/6. Its function is as follows. Involved in the biosynthesis of lipid A, a phosphorylated glycolipid that anchors the lipopolysaccharide to the outer membrane of the cell. The sequence is that of Acyl-[acyl-carrier-protein]--UDP-N-acetylglucosamine O-acyltransferase from Burkholderia orbicola (strain MC0-3).